Consider the following 86-residue polypeptide: Large ribosomal subunit protein uL23 (86 aa).

It belongs to the universal ribosomal protein uL23 family. In terms of assembly, part of the 50S ribosomal subunit. Contacts protein L29.

Its function is as follows. Binds to 23S rRNA. One of the proteins that surrounds the polypeptide exit tunnel on the outside of the ribosome. This chain is Large ribosomal subunit protein uL23, found in Pyrococcus horikoshii (strain ATCC 700860 / DSM 12428 / JCM 9974 / NBRC 100139 / OT-3).